The sequence spans 348 residues: Chaperone protein DnaJ (348 aa).

The J domain maps to 3 to 65; sequence DLYGILGVDH…EQRQRYDRHV (63 aa). Residues 109–191 form a CR-type zinc finger; the sequence is GGSQVVKIDS…CYGNGSRSAP (83 aa). Zn(2+) is bound by residues cysteine 122, cysteine 125, cysteine 139, cysteine 142, cysteine 165, cysteine 168, cysteine 179, and cysteine 182. CXXCXGXG motif repeat units follow at residues 122-129, 139-146, 165-172, and 179-186; these read CDVCNGTR, CFDCNGSG, CSKCRGNG, and CRRCYGNG.

This sequence belongs to the DnaJ family. As to quaternary structure, homodimer. The cofactor is Zn(2+).

It localises to the cytoplasm. Participates actively in the response to hyperosmotic and heat shock by preventing the aggregation of stress-denatured proteins and by disaggregating proteins, also in an autonomous, DnaK-independent fashion. Unfolded proteins bind initially to DnaJ; upon interaction with the DnaJ-bound protein, DnaK hydrolyzes its bound ATP, resulting in the formation of a stable complex. GrpE releases ADP from DnaK; ATP binding to DnaK triggers the release of the substrate protein, thus completing the reaction cycle. Several rounds of ATP-dependent interactions between DnaJ, DnaK and GrpE are required for fully efficient folding. Also involved, together with DnaK and GrpE, in the DNA replication of plasmids through activation of initiation proteins. This is Chaperone protein DnaJ from Tropheryma whipplei (strain Twist) (Whipple's bacillus).